Reading from the N-terminus, the 214-residue chain is Thiamine-phosphate synthase (214 aa).

4-amino-2-methyl-5-(diphosphooxymethyl)pyrimidine is bound by residues 37–41 (QYREK) and Asn-73. Residues Asp-74 and Asp-93 each contribute to the Mg(2+) site. Residue Ser-112 participates in 4-amino-2-methyl-5-(diphosphooxymethyl)pyrimidine binding. Position 139–141 (139–141 (TIS)) interacts with 2-[(2R,5Z)-2-carboxy-4-methylthiazol-5(2H)-ylidene]ethyl phosphate. Lys-142 lines the 4-amino-2-methyl-5-(diphosphooxymethyl)pyrimidine pocket. Residues Gly-171 and 191-192 (IS) each bind 2-[(2R,5Z)-2-carboxy-4-methylthiazol-5(2H)-ylidene]ethyl phosphate.

The protein belongs to the thiamine-phosphate synthase family. The cofactor is Mg(2+).

The catalysed reaction is 2-[(2R,5Z)-2-carboxy-4-methylthiazol-5(2H)-ylidene]ethyl phosphate + 4-amino-2-methyl-5-(diphosphooxymethyl)pyrimidine + 2 H(+) = thiamine phosphate + CO2 + diphosphate. The enzyme catalyses 2-(2-carboxy-4-methylthiazol-5-yl)ethyl phosphate + 4-amino-2-methyl-5-(diphosphooxymethyl)pyrimidine + 2 H(+) = thiamine phosphate + CO2 + diphosphate. It carries out the reaction 4-methyl-5-(2-phosphooxyethyl)-thiazole + 4-amino-2-methyl-5-(diphosphooxymethyl)pyrimidine + H(+) = thiamine phosphate + diphosphate. It functions in the pathway cofactor biosynthesis; thiamine diphosphate biosynthesis; thiamine phosphate from 4-amino-2-methyl-5-diphosphomethylpyrimidine and 4-methyl-5-(2-phosphoethyl)-thiazole: step 1/1. Its function is as follows. Condenses 4-methyl-5-(beta-hydroxyethyl)thiazole monophosphate (THZ-P) and 2-methyl-4-amino-5-hydroxymethyl pyrimidine pyrophosphate (HMP-PP) to form thiamine monophosphate (TMP). In Listeria monocytogenes serotype 4b (strain CLIP80459), this protein is Thiamine-phosphate synthase.